The primary structure comprises 92 residues: RNA-binding protein Hfq (92 aa).

The 60-residue stretch at 9-68 (DPYLNALRRERIPVSIYLVNGIKLQGQIESFDQFVILLKNTVSQMVYKHAISTVVPARSV) folds into the Sm domain. Over residues 69–81 (SHNNGGTSHTQQA) the composition is skewed to polar residues. The tract at residues 69-92 (SHNNGGTSHTQQAPAVEAVADKAE) is disordered.

The protein belongs to the Hfq family. As to quaternary structure, homohexamer.

Its function is as follows. RNA chaperone that binds small regulatory RNA (sRNAs) and mRNAs to facilitate mRNA translational regulation in response to envelope stress, environmental stress and changes in metabolite concentrations. Also binds with high specificity to tRNAs. This is RNA-binding protein Hfq from Actinobacillus pleuropneumoniae serotype 5b (strain L20).